We begin with the raw amino-acid sequence, 248 residues long: Tyrosine recombinase XerD-like (248 aa).

Residues 1–72 (MKSYIEPFIA…TANQFLYYLY (72 aa)) form the Core-binding (CB) domain. Residues 85-248 (DTMKVMRTEK…PVTLEKYYKS (164 aa)) form the Tyr recombinase domain. Catalysis depends on residues Lys-149 and Arg-213. Tyr-245 serves as the catalytic O-(3'-phospho-DNA)-tyrosine intermediate.

Belongs to the 'phage' integrase family. XerD-like subfamily.

The protein resides in the cytoplasm. In terms of biological role, putative tyrosine recombinase. Not involved in the cutting and rejoining of the recombining DNA molecules on dif(SL) site. The polypeptide is Tyrosine recombinase XerD-like (Streptococcus pyogenes serotype M28 (strain MGAS6180)).